Here is a 123-residue protein sequence, read N- to C-terminus: Succinate dehydrogenase assembly factor 3, mitochondrial (123 aa).

A mitochondrion-targeting transit peptide spans 1–31 (MANPAHISAVRTLYKKILVLHRFLPIDLRAL).

The protein belongs to the complex I LYR family. SDHAF3 subfamily. In terms of assembly, interacts with sdhb within an sdha-sdhb subcomplex.

Its subcellular location is the mitochondrion matrix. Plays an essential role in the assembly of succinate dehydrogenase (SDH), an enzyme complex (also referred to as respiratory complex II) that is a component of both the tricarboxylic acid (TCA) cycle and the mitochondrial electron transport chain, and which couples the oxidation of succinate to fumarate with the reduction of ubiquinone (coenzyme Q) to ubiquinol. Promotes maturation of the iron-sulfur protein subunit sdhb of the SDH catalytic dimer, protecting it from the deleterious effects of oxidants. May act together with SDHAF1. The sequence is that of Succinate dehydrogenase assembly factor 3, mitochondrial from Danio rerio (Zebrafish).